A 129-amino-acid polypeptide reads, in one-letter code: Follitropin subunit beta (129 aa).

A signal peptide spans 1-20; it reads MKSVQLCFLFCCWRAICCKS. Disulfide bonds link Cys-21–Cys-69, Cys-35–Cys-84, Cys-38–Cys-122, Cys-46–Cys-100, Cys-50–Cys-102, and Cys-105–Cys-112. Residues Asn-25 and Asn-42 are each glycosylated (N-linked (GlcNAc...) asparagine).

It belongs to the glycoprotein hormones subunit beta family. As to quaternary structure, heterodimer. The active follitropin is a heterodimer composed of an alpha chain/CGA shared with other hormones and a unique beta chain/FSHB shown here.

The protein localises to the secreted. Functionally, together with the alpha chain CGA constitutes follitropin, the follicle-stimulating hormone, and provides its biological specificity to the hormone heterodimer. Binds FSHR, a G protein-coupled receptor, on target cells to activate downstream signaling pathways. Follitropin is involved in follicle development and spermatogenesis in reproductive organs. The polypeptide is Follitropin subunit beta (FSHB) (Ailuropoda melanoleuca (Giant panda)).